The primary structure comprises 105 residues: Small ribosomal subunit protein uS10c (105 aa).

This sequence belongs to the universal ribosomal protein uS10 family. Part of the 30S ribosomal subunit.

It is found in the plastid. The protein resides in the chloroplast. Its function is as follows. Involved in the binding of tRNA to the ribosomes. In Pyropia yezoensis (Susabi-nori), this protein is Small ribosomal subunit protein uS10c.